Consider the following 340-residue polypeptide: Coproporphyrin III ferrochelatase (340 aa).

Fe-coproporphyrin III is bound by residues Ser52 and Tyr116. Fe(2+)-binding residues include His172 and Glu255.

It belongs to the ferrochelatase family.

The protein resides in the cytoplasm. The enzyme catalyses Fe-coproporphyrin III + 2 H(+) = coproporphyrin III + Fe(2+). It functions in the pathway porphyrin-containing compound metabolism; protoheme biosynthesis. Functionally, involved in coproporphyrin-dependent heme b biosynthesis. Catalyzes the insertion of ferrous iron into coproporphyrin III to form Fe-coproporphyrin III. In Mycobacterium marinum (strain ATCC BAA-535 / M), this protein is Coproporphyrin III ferrochelatase.